A 569-amino-acid polypeptide reads, in one-letter code: Phosphatase and actin regulator 2 (569 aa).

Residues Met1 to Pro13 show a composition bias toward polar residues. The disordered stretch occupies residues Met1 to Thr47. Phosphoserine is present on Ser27. Thr36 carries the post-translational modification Phosphothreonine. Residues Ala71 to Pro96 form an RPEL 1 repeat. 2 disordered regions span residues Gln98–Pro253 and Pro295–Lys483. Residues Gly140 to Thr151 show a composition bias toward basic and acidic residues. A compositionally biased stretch (low complexity) spans Gly162–Ser176. Over residues Leu212–Leu224 the composition is skewed to polar residues. Ser357 bears the Phosphoserine mark. Residues Thr386 to Thr399 are compositionally biased toward acidic residues. 3 RPEL repeats span residues Asp412–Ser437, Thr450–Asn475, and Arg488–Glu513. Positions Ser423 to Leu444 are enriched in basic and acidic residues. Residue Ser457 is modified to Phosphoserine. Over residues Thr461–Lys483 the composition is skewed to basic and acidic residues. Ser495 carries the phosphoserine modification.

This sequence belongs to the phosphatase and actin regulator family. As to quaternary structure, binds PPP1CA and actin. Expressed in the brain with high levels in the cerebellum, specifically in the Purkinje cell layer, choroid plexus and thalamus (ventral, rhomboid and anterior nuclei). Moderate to high expression in the hippocampus, piriform cortex, olfactory bulb, entorhinal cortex, as well as in geniculate bodies, lamboid septal zone, preoptic area and ventral pallidum (at protein level).

The protein is Phosphatase and actin regulator 2 (Phactr2) of Rattus norvegicus (Rat).